Consider the following 665-residue polypeptide: Macrolide export ATP-binding/permease protein MacB (665 aa).

The region spanning 17-255 (MQVKGLIREF…VAQFSSIIDK (239 aa)) is the ABC transporter domain. Residue 53 to 60 (GQSGSGKS) coordinates ATP. Helical transmembrane passes span 287-307 (LLTMLGIIIGIASVVSVVGLG), 544-564 (IAIISLIVGGIGVMNIMLVSV), 588-608 (FLIEAVLVCILGGLLGIGMAF), and 630-650 (SIIAAFVCSTLIGVVFGFLPA).

The protein belongs to the ABC transporter superfamily. Macrolide exporter (TC 3.A.1.122) family. In terms of assembly, homodimer. Part of the tripartite efflux system MacAB-TolC, which is composed of an inner membrane transporter, MacB, a periplasmic membrane fusion protein, MacA, and an outer membrane component, TolC. The complex forms a large protein conduit and can translocate molecules across both the inner and outer membranes. Interacts with MacA.

It localises to the cell inner membrane. In terms of biological role, part of the tripartite efflux system MacAB-TolC. MacB is a non-canonical ABC transporter that contains transmembrane domains (TMD), which form a pore in the inner membrane, and an ATP-binding domain (NBD), which is responsible for energy generation. Confers resistance against macrolides. In Psychrobacter arcticus (strain DSM 17307 / VKM B-2377 / 273-4), this protein is Macrolide export ATP-binding/permease protein MacB.